Consider the following 548-residue polypeptide: Probable nuclear hormone receptor HR3 (548 aa).

The disordered stretch occupies residues 1-27 (MNNNQFHELFGSQWPPDQHGGHSSAST). Positions 101–176 (IIPCKVCGDK…LGMSRDAVKF (76 aa)) form a DNA-binding region, nuclear receptor. NR C4-type zinc fingers lie at residues 104-124 (CKVC…CEGC) and 140-164 (CPRN…LQKC). Positions 198 to 228 (MRAQNDAAPDSVYDAQQQTPSSSDQFHGHYN) are disordered. Polar residues predominate over residues 211–222 (DAQQQTPSSSDQ). Positions 295–539 (ISKVLVKSLA…PALYKELFSL (245 aa)) constitute an NR LBD domain.

The protein belongs to the nuclear hormone receptor family. NR1 subfamily.

The protein resides in the nucleus. Functionally, putative receptor whose ligand is not yet known. The polypeptide is Probable nuclear hormone receptor HR3 (HR3) (Manduca sexta (Tobacco hawkmoth)).